A 326-amino-acid chain; its full sequence is tRNA uridine(34) hydroxylase (326 aa).

The region spanning 122 to 218 (EENRCLVLDV…YGQAVGTGKW (97 aa)) is the Rhodanese domain. Cysteine 178 serves as the catalytic Cysteine persulfide intermediate.

This sequence belongs to the TrhO family.

The catalysed reaction is uridine(34) in tRNA + AH2 + O2 = 5-hydroxyuridine(34) in tRNA + A + H2O. Functionally, catalyzes oxygen-dependent 5-hydroxyuridine (ho5U) modification at position 34 in tRNAs. The chain is tRNA uridine(34) hydroxylase from Chlamydia abortus (strain DSM 27085 / S26/3) (Chlamydophila abortus).